Consider the following 391-residue polypeptide: Homocysteine-responsive endoplasmic reticulum-resident ubiquitin-like domain member 1 protein (391 aa).

N-acetylmethionine is present on Met-1. Residues 1 to 263 (MESETEPEPV…VEEDDEINRD (263 aa)) are Cytoplasmic-facing. Residues 10 to 72 (VTLLVKSPNQ…LLDHQCLRDL (63 aa)) enclose the Ubiquitin-like domain. The tract at residues 100 to 126 (KVAESTEEPAGSNRGQYPEDSSSDGLR) is disordered. Residues 112-124 (NRGQYPEDSSSDG) show a composition bias toward polar residues. The segment at 115 to 200 (QYPEDSSSDG…ASGAFVPPPS (86 aa)) is interaction with UBQLN1. Ser-135 is subject to Phosphoserine. The interval 170-190 (LSWFQQIYARQYYMQYLAATA) is interaction with SYVN1. The helical transmembrane segment at 264–284 (WLDWTYSAATFSVFLSILYFY) threads the bilayer. Topologically, residues 285 to 289 (SSLSR) are lumenal. The helical transmembrane segment at 290 to 310 (FLMVMGATVVMYLHHVGWFPF) threads the bilayer. Over 311-391 (RPRPVQNFPN…LPEGPPAIAN (81 aa)) the chain is Cytoplasmic. The segment at 318–359 (FPNDGPPPDVVNQDPNNNLQEGTDPETEDPNHLPPDRDVLDG) is disordered. The span at 346-357 (DPNHLPPDRDVL) shows a compositional bias: basic and acidic residues.

Interacts with PSEN1 and PSEN2. Interacts with UBXN6. Interacts with UBQLN1, UBQLN2 and UBQLN4. Component of the HRD1 complex, which comprises at least SYNV1/HRD1, FAM8A1, HERPUD1/HERP, OS9, SEL1L and UBE2J1. FAM8A1 binding to SYNV1 may promote recruitment of HERPUD1 to the HRD1 complex. As to expression, widely expressed; in the brain, expression seems to be restricted to neurons and vascular smooth muscle cells. Present in activated microglia in senile plaques in the brain of patients with Alzheimer disease.

The protein resides in the endoplasmic reticulum membrane. Component of the endoplasmic reticulum quality control (ERQC) system also called ER-associated degradation (ERAD) involved in ubiquitin-dependent degradation of misfolded endoplasmic reticulum proteins. Could enhance presenilin-mediated amyloid-beta protein 40 generation. Binds to ubiquilins and this interaction is required for efficient degradation of CD3D via the ERAD pathway. This chain is Homocysteine-responsive endoplasmic reticulum-resident ubiquitin-like domain member 1 protein (HERPUD1), found in Homo sapiens (Human).